A 337-amino-acid chain; its full sequence is Cytoskeleton protein RodZ (337 aa).

Over 1–111 (MNTEATHDQN…LGKRRKKRDG (111 aa)) the chain is Cytoplasmic. Residues 19 to 71 (LRNAREQLGLSQQAVAERLCLKVSTVRDIEEDKAPADLASTFLRGYIRSYARL) form the HTH cro/C1-type domain. Positions 30–49 (QQAVAERLCLKVSTVRDIEE) form a DNA-binding region, H-T-H motif. A helical; Signal-anchor for type II membrane protein transmembrane segment spans residues 112 to 132 (WLMTFTWLVLFVVIGLSGAWW). At 133-337 (WQDHKAQQEE…TLNAEQSPAQ (205 aa)) the chain is on the periplasmic side. Residues 145–167 (TMADQSSAELSSNSEQGQSVPLN) are compositionally biased toward polar residues. Residues 145–218 (TMADQSSAEL…AVVSPSQANV (74 aa)) are disordered. The span at 168–207 (TSTTTDPATTSTPPASVDTTATNTQTPAVTAPAPAVDPQQ) shows a compositional bias: low complexity. The segment covering 208–218 (NAVVSPSQANV) has biased composition (polar residues).

It belongs to the RodZ family.

Its subcellular location is the cell inner membrane. Cytoskeletal protein that is involved in cell-shape control through regulation of the length of the long axis. The sequence is that of Cytoskeleton protein RodZ from Shigella flexneri serotype 5b (strain 8401).